The sequence spans 73 residues: Translation initiation factor IF-1 (73 aa).

The S1-like domain maps to 1–72 (MAKEDVIEVE…TKGRITYRFI (72 aa)).

It belongs to the IF-1 family. In terms of assembly, component of the 30S ribosomal translation pre-initiation complex which assembles on the 30S ribosome in the order IF-2 and IF-3, IF-1 and N-formylmethionyl-tRNA(fMet); mRNA recruitment can occur at any time during PIC assembly.

The protein localises to the cytoplasm. Its function is as follows. One of the essential components for the initiation of protein synthesis. Stabilizes the binding of IF-2 and IF-3 on the 30S subunit to which N-formylmethionyl-tRNA(fMet) subsequently binds. Helps modulate mRNA selection, yielding the 30S pre-initiation complex (PIC). Upon addition of the 50S ribosomal subunit IF-1, IF-2 and IF-3 are released leaving the mature 70S translation initiation complex. The polypeptide is Translation initiation factor IF-1 (Lactobacillus johnsonii (strain CNCM I-12250 / La1 / NCC 533)).